Consider the following 263-residue polypeptide: H-2 class II histocompatibility antigen, A-S beta chain (263 aa).

A signal peptide spans 1 to 27 (MALQIPSLLLSAAVVVLMVLSSPGTEG). Positions 28–120 (GDSERHFVFQ…VETHTSLRRL (93 aa)) are beta-1. Residues 28-224 (GDSERHFVFQ…RAQSESARSK (197 aa)) are Extracellular-facing. Cystine bridges form between cysteine 42-cysteine 104 and cysteine 143-cysteine 199. A glycan (N-linked (GlcNAc...) asparagine) is linked at asparagine 46. Residues 121–214 (EQPNVVISLS…SLKSPITVEW (94 aa)) form a beta-2 region. Residues 123–211 (PNVVISLSRT…EHPSLKSPIT (89 aa)) form the Ig-like C1-type domain. A connecting peptide region spans residues 215-224 (RAQSESARSK). A helical transmembrane segment spans residues 225–245 (MLSGIGGCVLGVIFLGLGLFI). Residues 246 to 263 (RHRSQKGPRGPPPAGLLQ) lie on the Cytoplasmic side of the membrane.

This sequence belongs to the MHC class II family. Post-translationally, ubiquitinated in immature dendritic cells leading to down-regulation of MHC class II.

It localises to the membrane. The sequence is that of H-2 class II histocompatibility antigen, A-S beta chain (H2-Ab1) from Mus musculus (Mouse).